Consider the following 586-residue polypeptide: Retron Ec67 protein (586 aa).

The Reverse transcriptase domain occupies 29 to 262 (FLTNVLYRIG…SRQEVTGLTV (234 aa)). Mg(2+)-binding residues include Asp120, Asp201, and Asp202.

Belongs to the bacterial reverse transcriptase family.

The catalysed reaction is DNA(n) + a 2'-deoxyribonucleoside 5'-triphosphate = DNA(n+1) + diphosphate. The enzyme catalyses Endonucleolytic cleavage to 5'-phosphomonoester.. Its function is as follows. Reverse transcriptase (RT) component of antiviral defense system retron Ec67, minimally composed of a non-coding RNA (ncRNA) and this RT. Expression of these 2 elements confers protection against bacteriophage T5. At multiplicity of infection (MOI) of 0.02 cultures grow normally when infected with T5 without collapsing, at MOI 2 cultures enter growth stasis. Responsible for synthesis of msDNA-Ec67 (a branched molecule with RNA linked by a 2',5'-phosphodiester bond to ssDNA). The retron transcript serves as primer (from a conserved internal G residue) and template for the reaction, and codes for the RT. Can use other retrons as substrate (msDNA-Mx162 and msDNA-Ec86). Also able to synthesize DNA from a DNA template at least in vitro, although the enzyme is less active with a DNA template. This is Retron Ec67 protein from Escherichia coli.